We begin with the raw amino-acid sequence, 468 residues long: Glutamate--tRNA ligase 2 (468 aa).

The 'HIGH' region motif lies at 11–21 (PSPTGFLHIGG). Positions 239 to 243 (KLSKR) match the 'KMSKS' region motif. Lys242 is a binding site for ATP.

It belongs to the class-I aminoacyl-tRNA synthetase family. Glutamate--tRNA ligase type 1 subfamily. As to quaternary structure, monomer.

The protein localises to the cytoplasm. The catalysed reaction is tRNA(Glu) + L-glutamate + ATP = L-glutamyl-tRNA(Glu) + AMP + diphosphate. Its function is as follows. Catalyzes the attachment of glutamate to tRNA(Glu) in a two-step reaction: glutamate is first activated by ATP to form Glu-AMP and then transferred to the acceptor end of tRNA(Glu). This is Glutamate--tRNA ligase 2 from Ruegeria pomeroyi (strain ATCC 700808 / DSM 15171 / DSS-3) (Silicibacter pomeroyi).